The chain runs to 254 residues: Small ribosomal subunit protein uS2 (254 aa).

Belongs to the universal ribosomal protein uS2 family.

The sequence is that of Small ribosomal subunit protein uS2 from Borrelia hermsii (strain HS1 / DAH).